The following is a 351-amino-acid chain: LIM/homeobox protein ceh-14 (351 aa).

LIM zinc-binding domains lie at 46-105 (AICS…KFGT) and 105-169 (TKCS…ARDK). Positions 180-239 (NKRPRTTISAKSLETLKQAYQTSSKPARHVREQLASETGLDMRVVQVWFQNRRAKEKRLK) form a DNA-binding region, homeobox. Residues 238-254 (LKKDAGRRWKSSNRAES) are compositionally biased toward basic and acidic residues. The disordered stretch occupies residues 238 to 268 (LKKDAGRRWKSSNRAESDSNSPIESINGQSP). Positions 255-268 (DSNSPIESINGQSP) are enriched in polar residues.

In terms of assembly, interacts (via LIM zinc-binding domains 1 and 2) with lim-7 (via LID domain). May interact with itself. May interact with homeobox protein ceh-63. As to expression, expressed in the anterior AFDL/R sensory neurons and BDUL/R and ALA interneurons, and in PVT, PVQL/R, DVC, PVNL/R, PVWL/R, PVR, PHCL/R, PHAL/R and PHBL/R cells in the tail region.

The protein localises to the nucleus. In terms of biological role, probable transcription factor, modulating expression of helix-loop-helix protein mbr-1 and homeobox protein ceh-63, perhaps acting in concert with ceh-63. Binds to a motif including the sequence 5'-CTAAT-3' in regulatory promoter elements. Confers thermosensory function to neurons. Required for correct AFD-mediated thermotaxis. In concert with homeobox protein ttx-1, perhaps as components in a complex, specifies identity of AFD neurons, acting by synergistically regulating receptor-type guanylyl cyclase gcy-8, gcy-18 and other genes. Involved in postembryonic differentiation of the ALA neuron, and regulation of genes that contribute to behavioral quiescence, a sleep-like behavior mediated by ALA. Regulates its own expression and also that of homeodomain ceh-17, together forming an autoregulatory loop in the ALA neuron. Required for initial pathfinding of the ALA axons, but largely dispensable for axon migration. Involved in regulating postembryonic axon maintenance in the ventral nerve cord, acting in concert with LIM homeobox protein lim-6, via modulation of expression of immunoglobulin domain zig genes in the interneuron PVT. Plays a role in controlling the peptidergic identity of the BDU neurons, regulating expression of flp-10, nlp-1, and nlp-15, thereby modulating the harsh touch response. This is LIM/homeobox protein ceh-14 (ceh-14) from Caenorhabditis elegans.